The sequence spans 125 residues: Protein U2 (125 aa).

Belongs to the nanovirus U2 protein family.

This chain is Protein U2 (DNA-U2), found in Milk vetch dwarf virus (isolate N) (MDV).